Here is a 120-residue protein sequence, read N- to C-terminus: C-C motif chemokine 27 (120 aa).

The first 25 residues, 1–25, serve as a signal peptide directing secretion; it reads MMEGLSPASSLPLLLLLLSPAPEAA. Cystine bridges form between Cys-34–Cys-63 and Cys-35–Cys-78.

Belongs to the intercrine beta (chemokine CC) family. Monomer, dimer, and tetramer. Heparin avidly promotes oligomerization. Interacts with TNFAIP6 (via Link domain). Isoform 1 is predominantly expressed in placenta and weakly in skin. Isoform 2 is predominantly expressed in testes and brain, weakly in kidney and liver and even lower in heart and muscle. Low expression of both isoforms in other tissues.

The protein localises to the secreted. Its subcellular location is the nucleus. In terms of biological role, chemotactic factor that attracts skin-associated memory T-lymphocytes. May play a role in mediating homing of lymphocytes to cutaneous sites. May play a role in cell migration during embryogenesis. Nuclear forms may facilitate cellular migration by inducing cytoskeletal relaxation. Binds to CCR10. The chain is C-C motif chemokine 27 (Ccl27) from Mus musculus (Mouse).